The chain runs to 901 residues: HTH-type transcriptional regulator MalT (901 aa).

39 to 46 (SPAGYGKT) serves as a coordination point for ATP. Residues 829 to 894 (ELIRTSPLTQ…DAVQHAQQLL (66 aa)) enclose the HTH luxR-type domain. Positions 853–872 (NEQIAGELAVAATTIKTHIR) form a DNA-binding region, H-T-H motif.

This sequence belongs to the MalT family. In terms of assembly, monomer in solution. Oligomerizes to an active state in the presence of the positive effectors ATP and maltotriose.

Activated by ATP and maltotriose, which are both required for DNA binding. Its function is as follows. Positively regulates the transcription of the maltose regulon whose gene products are responsible for uptake and catabolism of malto-oligosaccharides. Specifically binds to the promoter region of its target genes, recognizing a short DNA motif called the MalT box. This is HTH-type transcriptional regulator MalT from Salmonella agona (strain SL483).